We begin with the raw amino-acid sequence, 439 residues long: 3-phosphoshikimate 1-carboxyvinyltransferase (439 aa).

The 3-phosphoshikimate site is built by lysine 27, serine 28, and arginine 32. Lysine 27 contributes to the phosphoenolpyruvate binding site. 2 residues coordinate phosphoenolpyruvate: glycine 101 and arginine 130. 3-phosphoshikimate contacts are provided by serine 175, glutamine 177, aspartate 326, and lysine 353. Glutamine 177 contributes to the phosphoenolpyruvate binding site. Residue aspartate 326 is the Proton acceptor of the active site. Positions 357 and 399 each coordinate phosphoenolpyruvate.

Belongs to the EPSP synthase family. Monomer.

It is found in the cytoplasm. It catalyses the reaction 3-phosphoshikimate + phosphoenolpyruvate = 5-O-(1-carboxyvinyl)-3-phosphoshikimate + phosphate. It functions in the pathway metabolic intermediate biosynthesis; chorismate biosynthesis; chorismate from D-erythrose 4-phosphate and phosphoenolpyruvate: step 6/7. Catalyzes the transfer of the enolpyruvyl moiety of phosphoenolpyruvate (PEP) to the 5-hydroxyl of shikimate-3-phosphate (S3P) to produce enolpyruvyl shikimate-3-phosphate and inorganic phosphate. The chain is 3-phosphoshikimate 1-carboxyvinyltransferase from Synechococcus sp. (strain WH7803).